The following is a 153-amino-acid chain: Regulatory protein RecX (153 aa).

The protein belongs to the RecX family.

It localises to the cytoplasm. Functionally, modulates RecA activity. This chain is Regulatory protein RecX, found in Pseudomonas aeruginosa (strain UCBPP-PA14).